Consider the following 231-residue polypeptide: Ribose-5-phosphate isomerase A (231 aa).

Residues 31-34 (TGST), 86-89 (DGAD), and 100-103 (KGLG) each bind substrate. Catalysis depends on Glu109, which acts as the Proton acceptor. Lys127 contacts substrate.

The protein belongs to the ribose 5-phosphate isomerase family. Homodimer.

It catalyses the reaction aldehydo-D-ribose 5-phosphate = D-ribulose 5-phosphate. The protein operates within carbohydrate degradation; pentose phosphate pathway; D-ribose 5-phosphate from D-ribulose 5-phosphate (non-oxidative stage): step 1/1. In terms of biological role, catalyzes the reversible conversion of ribose-5-phosphate to ribulose 5-phosphate. This is Ribose-5-phosphate isomerase A from Gluconobacter oxydans (strain 621H) (Gluconobacter suboxydans).